The chain runs to 375 residues: All-trans-retinol dehydrogenase [NAD(+)] ADH1B (375 aa).

At Ser-2 the chain carries N-acetylserine. Ser-23 carries the post-translational modification Phosphoserine. At Tyr-35 the chain carries Phosphotyrosine. Positions 47, 68, 98, 101, 104, 112, and 175 each coordinate Zn(2+). Residues 200–205 (GLGGVG), Asp-224, Lys-229, 293–295 (VGV), and Arg-370 contribute to the NAD(+) site.

It belongs to the zinc-containing alcohol dehydrogenase family. In terms of assembly, homodimer or heterodimer of closely related subunits. The cofactor is Zn(2+).

It is found in the cytoplasm. It carries out the reaction all-trans-retinol + NAD(+) = all-trans-retinal + NADH + H(+). It catalyses the reaction all-trans-4-hydroxyretinol + NAD(+) = all-trans-4-hydroxyretinal + NADH + H(+). The catalysed reaction is all-trans-4-oxoretinol + NAD(+) = all-trans-4-oxoretinal + NADH + H(+). In terms of biological role, catalyzes the NAD-dependent oxidation of all-trans-retinol and its derivatives such as all-trans-4-hydroxyretinol and may participate in retinoid metabolism. In vitro can also catalyze the NADH-dependent reduction of all-trans-retinal and its derivatives such as all-trans-4-oxoretinal. Catalyzes in the oxidative direction with higher efficiency. Has the same affinity for all-trans-4-hydroxyretinol and all-trans-4-oxoretinal. The protein is All-trans-retinol dehydrogenase [NAD(+)] ADH1B of Pan troglodytes (Chimpanzee).